Consider the following 565-residue polypeptide: Liver carboxylesterase 1 (565 aa).

Positions 1 to 18 (MWLCALALASLAACTAWG) are cleaved as a signal peptide. A glycan (N-linked (GlcNAc...) asparagine) is linked at Asn79. A disulfide bridge connects residues Cys87 and Cys116. Ser221 serves as the catalytic Acyl-ester intermediate. The cysteines at positions 273 and 284 are disulfide-linked. Glu353 serves as the catalytic Charge relay system. A glycan (N-linked (GlcNAc...) asparagine) is linked at Asn389. His467 serves as the catalytic Charge relay system. A short sequence motif (prevents secretion from ER) is located at residue Leu565.

It belongs to the type-B carboxylesterase/lipase family. Monomer.

The protein localises to the endoplasmic reticulum lumen. It catalyses the reaction a carboxylic ester + H2O = an alcohol + a carboxylate + H(+). In terms of biological role, involved in the detoxification of xenobiotics and in the activation of ester and amide prodrugs. The protein is Liver carboxylesterase 1 of Oryctolagus cuniculus (Rabbit).